A 666-amino-acid polypeptide reads, in one-letter code: tRNA 5-methylaminomethyl-2-thiouridine biosynthesis bifunctional protein MnmC (666 aa).

The segment at 1-245 (MKQYAIQPAT…KREMLCGVME (245 aa)) is tRNA (mnm(5)s(2)U34)-methyltransferase. The interval 270-666 (IGGGIASALL…RKLLKGKAVK (397 aa)) is FAD-dependent cmnm(5)s(2)U34 oxidoreductase.

This sequence in the N-terminal section; belongs to the methyltransferase superfamily. tRNA (mnm(5)s(2)U34)-methyltransferase family. The protein in the C-terminal section; belongs to the DAO family. The cofactor is FAD.

The protein localises to the cytoplasm. The enzyme catalyses 5-aminomethyl-2-thiouridine(34) in tRNA + S-adenosyl-L-methionine = 5-methylaminomethyl-2-thiouridine(34) in tRNA + S-adenosyl-L-homocysteine + H(+). Catalyzes the last two steps in the biosynthesis of 5-methylaminomethyl-2-thiouridine (mnm(5)s(2)U) at the wobble position (U34) in tRNA. Catalyzes the FAD-dependent demodification of cmnm(5)s(2)U34 to nm(5)s(2)U34, followed by the transfer of a methyl group from S-adenosyl-L-methionine to nm(5)s(2)U34, to form mnm(5)s(2)U34. The chain is tRNA 5-methylaminomethyl-2-thiouridine biosynthesis bifunctional protein MnmC from Salmonella choleraesuis (strain SC-B67).